The chain runs to 318 residues: tRNA U34 carboxymethyltransferase (318 aa).

Carboxy-S-adenosyl-L-methionine-binding positions include lysine 85, tryptophan 99, lysine 104, glycine 124, 175-176 (LD), methionine 190, tyrosine 194, and arginine 311.

It belongs to the class I-like SAM-binding methyltransferase superfamily. CmoB family. Homotetramer.

The enzyme catalyses carboxy-S-adenosyl-L-methionine + 5-hydroxyuridine(34) in tRNA = 5-carboxymethoxyuridine(34) in tRNA + S-adenosyl-L-homocysteine + H(+). Catalyzes carboxymethyl transfer from carboxy-S-adenosyl-L-methionine (Cx-SAM) to 5-hydroxyuridine (ho5U) to form 5-carboxymethoxyuridine (cmo5U) at position 34 in tRNAs. In Ruthia magnifica subsp. Calyptogena magnifica, this protein is tRNA U34 carboxymethyltransferase.